We begin with the raw amino-acid sequence, 204 residues long: Protein DESIGUAL 4 (204 aa).

The next 4 helical transmembrane spans lie at isoleucine 13–phenylalanine 33, phenylalanine 60–isoleucine 80, cysteine 107–tryptophan 127, and valine 143–isoleucine 163. The disordered stretch occupies residues lysine 177 to proline 204. Residue asparagine 179 is glycosylated (N-linked (GlcNAc...) asparagine).

It belongs to the DESIGUAL family. Only expressed in inflorescences.

It is found in the endoplasmic reticulum membrane. This is Protein DESIGUAL 4 from Arabidopsis thaliana (Mouse-ear cress).